Here is a 132-residue protein sequence, read N- to C-terminus: SH2 domain-containing protein 1B2 (132 aa).

The 97-residue stretch at 5 to 101 (YYHGCLTKRE…GMVVHLSNPI (97 aa)) folds into the SH2 domain.

Interacts with SLAMF1 (phosphorylated). Interacts with CD244. Interacts with Src kinases HCK, LYN, FYN, FGR and LCK (via kinase domains). Expressed in spleen. Expressed in macrophages, CD8(+) T-Cells and NK cells. Conflictingly found only in NK cells.

Its subcellular location is the cytoplasm. In terms of biological role, cytoplasmic adapter regulating receptors of the signaling lymphocytic activation molecule (SLAM) family. In SLAM signaling may cooperate with Sh2d1a/SAP. Plays a role in regulation of effector functions of natural killer (NK) cells by controlling signal transduction through Cd244/2b4. However, conflicting results are reported which may reflect the use of different strain backgrounds. Proposed to act as an inhibitor of Cd244-mediated NK cell function including cytotoxicity and IFN-gamma production, the latter found also by triggering Klra4 and Klrk1 next to Cd244. Seems to positively regulate Cd244- and Cd84-dependent NK cell functions implicating Cd244-mediated phosphorylation of Vav1. The sequence is that of SH2 domain-containing protein 1B2 (Sh2d1b2) from Mus musculus (Mouse).